Here is a 268-residue protein sequence, read N- to C-terminus: Undecaprenyl-diphosphatase (268 aa).

Helical transmembrane passes span 47–67 (FAVL…FVKL), 83–103 (FVIG…AFGG), 109–129 (LFNP…LLWV), 144–164 (FPLL…IPGV), 184–204 (AAEF…VYDL), 217–237 (IIVA…VKTF), and 248–268 (LFAW…ALGL).

The protein belongs to the UppP family.

It is found in the cell inner membrane. It catalyses the reaction di-trans,octa-cis-undecaprenyl diphosphate + H2O = di-trans,octa-cis-undecaprenyl phosphate + phosphate + H(+). In terms of biological role, catalyzes the dephosphorylation of undecaprenyl diphosphate (UPP). Confers resistance to bacitracin. The chain is Undecaprenyl-diphosphatase from Rhodopseudomonas palustris (strain ATCC BAA-98 / CGA009).